Consider the following 251-residue polypeptide: CDP-diacylglycerol pyrophosphatase (251 aa).

Residues 4–24 traverse the membrane as a helical segment; that stretch reads AGLLFLVMIVIAVVAAGIGYW.

This sequence belongs to the Cdh family.

It is found in the cell inner membrane. It carries out the reaction a CDP-1,2-diacyl-sn-glycerol + H2O = a 1,2-diacyl-sn-glycero-3-phosphate + CMP + 2 H(+). It participates in phospholipid metabolism; CDP-diacylglycerol degradation; phosphatidate from CDP-diacylglycerol: step 1/1. This Shigella boydii serotype 4 (strain Sb227) protein is CDP-diacylglycerol pyrophosphatase.